We begin with the raw amino-acid sequence, 32 residues long: Secreted proteinase (32 aa).

A disordered region spans residues 1-32 (DTANDPKYGSQYAPQKVNADVDQGVXXXHPEL). Residue D22 is the Charge relay system of the active site.

The protein belongs to the peptidase S8 family.

The protein resides in the secreted. The chain is Secreted proteinase from Haloferax mediterranei (Halobacterium mediterranei).